The sequence spans 334 residues: Holliday junction branch migration complex subunit RuvB (334 aa).

The tract at residues 4-184 (ADRLIAADAQ…FGIVQRLEFY (181 aa)) is large ATPase domain (RuvB-L). ATP is bound by residues I23, R24, G65, K68, T69, T70, 131–133 (EDY), R174, Y184, and R221. T69 provides a ligand contact to Mg(2+). Residues 185-255 (QVADLQHIVG…VAAQALNMLD (71 aa)) form a small ATPAse domain (RuvB-S) region. The interval 258–334 (AAGFDYMDRK…YQHFGIDRAE (77 aa)) is head domain (RuvB-H). Residues R294, R313, and R318 each contribute to the DNA site.

It belongs to the RuvB family. In terms of assembly, homohexamer. Forms an RuvA(8)-RuvB(12)-Holliday junction (HJ) complex. HJ DNA is sandwiched between 2 RuvA tetramers; dsDNA enters through RuvA and exits via RuvB. An RuvB hexamer assembles on each DNA strand where it exits the tetramer. Each RuvB hexamer is contacted by two RuvA subunits (via domain III) on 2 adjacent RuvB subunits; this complex drives branch migration. In the full resolvosome a probable DNA-RuvA(4)-RuvB(12)-RuvC(2) complex forms which resolves the HJ.

It is found in the cytoplasm. It carries out the reaction ATP + H2O = ADP + phosphate + H(+). Its function is as follows. The RuvA-RuvB-RuvC complex processes Holliday junction (HJ) DNA during genetic recombination and DNA repair, while the RuvA-RuvB complex plays an important role in the rescue of blocked DNA replication forks via replication fork reversal (RFR). RuvA specifically binds to HJ cruciform DNA, conferring on it an open structure. The RuvB hexamer acts as an ATP-dependent pump, pulling dsDNA into and through the RuvAB complex. RuvB forms 2 homohexamers on either side of HJ DNA bound by 1 or 2 RuvA tetramers; 4 subunits per hexamer contact DNA at a time. Coordinated motions by a converter formed by DNA-disengaged RuvB subunits stimulates ATP hydrolysis and nucleotide exchange. Immobilization of the converter enables RuvB to convert the ATP-contained energy into a lever motion, pulling 2 nucleotides of DNA out of the RuvA tetramer per ATP hydrolyzed, thus driving DNA branch migration. The RuvB motors rotate together with the DNA substrate, which together with the progressing nucleotide cycle form the mechanistic basis for DNA recombination by continuous HJ branch migration. Branch migration allows RuvC to scan DNA until it finds its consensus sequence, where it cleaves and resolves cruciform DNA. The protein is Holliday junction branch migration complex subunit RuvB of Edwardsiella ictaluri (strain 93-146).